Consider the following 326-residue polypeptide: Vitamin B12 import system permease protein BtuC (326 aa).

The next 9 helical transmembrane spans lie at Ile13 to Glu35, Ile55 to Met77, Leu90 to Leu107, Gln111 to Leu133, Leu146 to Thr168, Trp188 to Cys205, Met242 to Leu264, Val274 to Leu296, and Leu303 to Leu322.

Belongs to the binding-protein-dependent transport system permease family. FecCD subfamily. As to quaternary structure, the complex is composed of two ATP-binding proteins (BtuD), two transmembrane proteins (BtuC) and a solute-binding protein (BtuF).

It is found in the cell inner membrane. Functionally, part of the ABC transporter complex BtuCDF involved in vitamin B12 import. Involved in the translocation of the substrate across the membrane. The protein is Vitamin B12 import system permease protein BtuC of Shigella flexneri.